The following is a 444-amino-acid chain: N-succinylarginine dihydrolase (444 aa).

Residues 19–28 (AGLSFGNVAS), Asn-110, and 137–138 (HR) contribute to the substrate site. Glu-174 is a catalytic residue. Arg-214 provides a ligand contact to substrate. His-250 is a catalytic residue. 2 residues coordinate substrate: Asp-252 and Asn-362. Cys-368 acts as the Nucleophile in catalysis.

The protein belongs to the succinylarginine dihydrolase family. Homodimer.

The catalysed reaction is N(2)-succinyl-L-arginine + 2 H2O + 2 H(+) = N(2)-succinyl-L-ornithine + 2 NH4(+) + CO2. Its pathway is amino-acid degradation; L-arginine degradation via AST pathway; L-glutamate and succinate from L-arginine: step 2/5. Functionally, catalyzes the hydrolysis of N(2)-succinylarginine into N(2)-succinylornithine, ammonia and CO(2). This is N-succinylarginine dihydrolase from Shewanella putrefaciens (strain CN-32 / ATCC BAA-453).